The following is a 472-amino-acid chain: Carboxypeptidase Q (472 aa).

The first 20 residues, 1 to 20, serve as a signal peptide directing secretion; that stretch reads MKFLIFAFFGGVHLLSLCSG. Positions 21–44 are excised as a propeptide; sequence KAICKNGISKRTFEEIKEEIASCG. N-linked (GlcNAc...) asparagine glycosylation is found at Asn61 and Asn179. 2 residues coordinate Zn(2+): His290 and Asp302. The Nucleophile role is filled by Glu336. Glu337 contacts Zn(2+). Asn353 and Asn356 each carry an N-linked (GlcNAc...) asparagine glycan. Position 364 (Asp364) interacts with Zn(2+). Asn396 carries an N-linked (GlcNAc...) asparagine glycan. His434 serves as a coordination point for Zn(2+).

Belongs to the peptidase M28 family. In terms of assembly, homodimer. The monomeric form is inactive while the homodimer is active. In terms of processing, N-glycosylated. The secreted form is modified by hybrid or complex type oligosaccharide chains. Mainly detected in blood plasma. Abundant in placenta and kidney. Present at low level in muscles, liver and skin fibroblasts. Not detected in brain or white blood cells (at protein level).

The protein localises to the endoplasmic reticulum. Its subcellular location is the golgi apparatus. The protein resides in the lysosome. It is found in the secreted. Its function is as follows. Carboxypeptidase that may play an important role in the hydrolysis of circulating peptides. Catalyzes the hydrolysis of dipeptides with unsubstituted terminals into amino acids. May play a role in the liberation of thyroxine hormone from its thyroglobulin (Tg) precursor. In Homo sapiens (Human), this protein is Carboxypeptidase Q (CPQ).